Here is a 747-residue protein sequence, read N- to C-terminus: MGASATNSVTHPAFTLNVRPDNIGIITIDVVGDKVNTLKAEFADQIATILQQAHALPKLQGLVIVSGKPDSFIAGADITMIAACRTAHDARVLAQKGQSILAQIAAFPVPVVAAIHGACLGGGLELALACHSRICSLDDKTVLGLPEVQLGLLPGSGGTQRLPRLVGVSKALDMILTGKQIRPRQALKMGLVDDVVPRDILLDVAIQRAKAGWLNRRALPWQERLLSGPLGKALLFRIVRKKTLAKTRGHYPAAERIIDVVRKGLDQGGPSGYEAEARAFGELAMSPQSAALRSLFFATTSLKKETGSAATARAIHRVGVLGGGLMGGGIANVTATRAGLPVRIKDINPQGINQALKYTWDALGKRVRSKRMRPTEQQRQMMLISGSTDYRGFERVDIVVEAVFEDLSLKQQMVADIERFGAAHTIFASNTSSLPISQIAALAQRPEQVIGLHYFSPVDKMPLVEVIPHEKTSEETIATTVALARKQGKTAIVVADRAGFYVNRILAPYINEAARCLLDGEPIESVDNALVDFGFPVGPMMLLDEVGIDVATKIMPILVEQLGPRFAAPPSFDVILKDGRKGRKNGRGFYLYSNPTKNSSPTKNGNSPAKRNSFKWRKNKVKPVDASIYTLLGVTPKAHLGAGVITQRCTMLMLNEAVRCLDESIIRNPRDGDIGAVFGIGFPPFLGGPFRYLDSLGADKVVQALRLLVQQYGERFEPCQRLVTMAEQQQQFYPVDANIDEVTDVAS.

Residues 1–197 (MGASATNSVT…KMGLVDDVVP (197 aa)) form an enoyl-CoA hydratase region. Residues 313–747 (RAIHRVGVLG…NIDEVTDVAS (435 aa)) are 3-hydroxyacyl-CoA dehydrogenase. The disordered stretch occupies residues 590–614 (YLYSNPTKNSSPTKNGNSPAKRNSF). The span at 593–610 (SNPTKNSSPTKNGNSPAK) shows a compositional bias: polar residues.

In the N-terminal section; belongs to the enoyl-CoA hydratase/isomerase family. The protein in the central section; belongs to the 3-hydroxyacyl-CoA dehydrogenase family. As to quaternary structure, heterotetramer of two alpha chains (FadJ) and two beta chains (FadI).

Its subcellular location is the cytoplasm. The catalysed reaction is a (3S)-3-hydroxyacyl-CoA = a (2E)-enoyl-CoA + H2O. It carries out the reaction a 4-saturated-(3S)-3-hydroxyacyl-CoA = a (3E)-enoyl-CoA + H2O. It catalyses the reaction a (3S)-3-hydroxyacyl-CoA + NAD(+) = a 3-oxoacyl-CoA + NADH + H(+). The enzyme catalyses (3S)-3-hydroxybutanoyl-CoA = (3R)-3-hydroxybutanoyl-CoA. Its pathway is lipid metabolism; fatty acid beta-oxidation. Its function is as follows. Catalyzes the formation of a hydroxyacyl-CoA by addition of water on enoyl-CoA. Also exhibits 3-hydroxyacyl-CoA epimerase and 3-hydroxyacyl-CoA dehydrogenase activities. The sequence is that of Fatty acid oxidation complex subunit alpha from Yersinia pseudotuberculosis serotype O:1b (strain IP 31758).